Reading from the N-terminus, the 158-residue chain is Phosphopantetheine adenylyltransferase (158 aa).

Ser-9 provides a ligand contact to substrate. ATP contacts are provided by residues 9 to 10 (SF) and His-17. Substrate contacts are provided by Lys-41, Val-73, and Lys-87. Residues 88–90 (GLR), Glu-98, and 122–128 (YSFVSSS) contribute to the ATP site.

Belongs to the bacterial CoaD family. In terms of assembly, homohexamer. The cofactor is Mg(2+).

The protein resides in the cytoplasm. The enzyme catalyses (R)-4'-phosphopantetheine + ATP + H(+) = 3'-dephospho-CoA + diphosphate. It participates in cofactor biosynthesis; coenzyme A biosynthesis; CoA from (R)-pantothenate: step 4/5. Its function is as follows. Reversibly transfers an adenylyl group from ATP to 4'-phosphopantetheine, yielding dephospho-CoA (dPCoA) and pyrophosphate. In Mycolicibacterium smegmatis (strain ATCC 700084 / mc(2)155) (Mycobacterium smegmatis), this protein is Phosphopantetheine adenylyltransferase.